The sequence spans 426 residues: Methylamine dehydrogenase heavy chain (426 aa).

Positions 1–31 (MASARESTPRYLTLIGATLACSALALGAAQA) are cleaved as a signal peptide. Residues 32–64 (QTEPAEPEAPAETAAADAAGQTEGQRGAAEAAA) are disordered. Residues C221 and C236 are joined by a disulfide bond.

This sequence belongs to the aromatic amine dehydrogenase heavy chain family. As to quaternary structure, tetramer of two light and two heavy chains.

It is found in the periplasm. It catalyses the reaction 2 oxidized [amicyanin] + methylamine + H2O = 2 reduced [amicyanin] + formaldehyde + NH4(+) + 2 H(+). Functionally, methylamine dehydrogenase carries out the oxidation of methylamine. Electrons are passed from methylamine dehydrogenase to amicyanin. The protein is Methylamine dehydrogenase heavy chain (mauB) of Paracoccus versutus (Thiobacillus versutus).